The following is a 222-amino-acid chain: Uridine diphosphate glucose pyrophosphatase NUDT14 (222 aa).

In terms of domain architecture, Nudix hydrolase spans 38 to 206 (KTHDSVTILM…DIPKTLGVIY (169 aa)). Positions 111-129 (PGLSLEEAACKEAWEECGY) match the Nudix box motif.

It belongs to the Nudix hydrolase family. As to quaternary structure, homodimer. Requires Mg(2+) as cofactor.

Its subcellular location is the cytoplasm. It carries out the reaction UDP-sugar + H2O = UMP + alpha-D-aldose 1-phosphate.. Its function is as follows. Hydrolyzes UDP-glucose to glucose 1-phosphate and UMP and ADP-ribose to ribose 5-phosphate and AMP. The physiological substrate is probably UDP-glucose. Poor activity on other substrates such as ADP-glucose, CDP-glucose, GDP-glucose and GDP-mannose. The sequence is that of Uridine diphosphate glucose pyrophosphatase NUDT14 (Nudt14) from Mus musculus (Mouse).